Reading from the N-terminus, the 394-residue chain is Phenylalanine 4-monooxygenase, chloroplastic (394 aa).

Residues 1–79 (MAMEVGYLRH…LNQIQAVSTA (79 aa)) constitute a chloroplast transit peptide. Residues 75 to 97 (AVSTAEKEREADKTSTPPIPSSI) form a disordered region. The Fe cation site is built by histidine 252, histidine 257, and glutamate 297.

It belongs to the biopterin-dependent aromatic amino acid hydroxylase family. As to quaternary structure, forms monomers. Requires Fe(2+) as cofactor.

The protein localises to the plastid. It localises to the chloroplast. It catalyses the reaction (6R)-L-erythro-5,6,7,8-tetrahydrobiopterin + L-phenylalanine + O2 = (4aS,6R)-4a-hydroxy-L-erythro-5,6,7,8-tetrahydrobiopterin + L-tyrosine. Catalyzes the hydroxylation of L-phenylalanine to L-tyrosine. Does not seem to be tetrahydropterin-dependent and shows preference for 10-formyltetrahydrofolate as cosubstrate and electron donor. The chain is Phenylalanine 4-monooxygenase, chloroplastic from Physcomitrium patens (Spreading-leaved earth moss).